Consider the following 129-residue polypeptide: Protein NrdI (129 aa).

This sequence belongs to the NrdI family.

In terms of biological role, probably involved in ribonucleotide reductase function. The sequence is that of Protein NrdI from Macrococcus caseolyticus (strain JCSC5402) (Macrococcoides caseolyticum).